A 192-amino-acid polypeptide reads, in one-letter code: MMMMMMRSTCNLTLMLCICALVVASMAAEGPRDFKVGDEFGWRVPLQNDSAVYSHWASSNRFHIGDSLSFVYDKDSVMEVDKWGFYHCNGSDPITAFDNGNSTFDLDRPGLFYFISGSNQHCTSGQRLIVEVMHIHQHHDHDASMPPSMSPLSNSASPYASASASSAASSLPTACLLIPLFLTIASFRFISY.

A signal peptide spans 1–27; that stretch reads MMMMMMRSTCNLTLMLCICALVVASMA. The Phytocyanin domain occupies 32–134; it reads RDFKVGDEFG…GQRLIVEVMH (103 aa). Residues Asn48, Asn89, and Asn101 are each glycosylated (N-linked (GlcNAc...) asparagine). Cys88 and Cys122 form a disulfide bridge. Ser166 carries the GPI-anchor amidated serine lipid modification. Residues 167 to 192 constitute a propeptide, removed in mature form; that stretch reads AASSLPTACLLIPLFLTIASFRFISY.

It belongs to the early nodulin-like (ENODL) family. As to expression, mostly expressed in flowers, and, to a lower extent, in seeds, but barely in seedlings, stems, leaves and roots.

It localises to the cell membrane. In terms of biological role, may act as a carbohydrate transporter. The polypeptide is Early nodulin-like protein 7 (Arabidopsis thaliana (Mouse-ear cress)).